Reading from the N-terminus, the 169-residue chain is Major fimbrial subunit SMF-1 (169 aa).

Residues methionine 1–alanine 11 form the signal peptide.

This sequence belongs to the fimbrial protein family.

It is found in the fimbrium. Its function is as follows. Involved in adherence to eukaryotic epithelial cells and abiotic surfaces. Mediates agglutination of animal red blood cells. This chain is Major fimbrial subunit SMF-1, found in Stenotrophomonas maltophilia (strain K279a).